The sequence spans 136 residues: DUF35 domain-containing scaffold protein (136 aa).

Residues Cys-25, Cys-38, and Cys-41 each contribute to the Zn(2+) site.

Belongs to the scaffold protein DUF35 family. Interacts with acetoacetyl-CoA thiolase and HMG-CoA synthase (HMGCS) that catalyzes the first and second step in the mevalonate pathway, respectively.

Its function is as follows. Functions as a scaffold to connect the acetoacetyl-CoA thiolase and HMG-CoA synthase (HMGCS) dimers in the channeling thiolase/HMGCS complex, which allows for efficient coupling of the endergonic thiolase reaction with the exergonic HMGCS reaction. In Pyrococcus furiosus (strain ATCC 43587 / DSM 3638 / JCM 8422 / Vc1), this protein is DUF35 domain-containing scaffold protein.